A 2068-amino-acid polypeptide reads, in one-letter code: Lipoxygenase homology domain-containing protein 1 (2068 aa).

PLAT domains lie at 43–160, 172–287, 296–412, 425–540, 553–673, 684–803, 814–934, 970–1088, 1101–1226, 1255–1373, 1422–1540, 1553–1668, 1680–1798, 1811–1932, and 1949–2065; these read KVYE…RDLL, NKYE…RDIL, ITYI…RQLY, YPWS…REMT, ARYR…RELL, FRYH…VELY, VHYE…RELL, TTFS…RDLF, VPYE…RELV, VLYS…RLFY, IPYY…RVFD, VLYE…CEIC, TSYT…RDFA, TTYE…VFEV, and VKYE…RELF.

Expressed in the inner ear, specifically in hair cells. Higher expression is detected in the cochlea.

It is found in the cell projection. The protein localises to the stereocilium. Functionally, required for normal function of hair cells in the inner ear. The polypeptide is Lipoxygenase homology domain-containing protein 1 (Loxhd1) (Mus musculus (Mouse)).